A 366-amino-acid chain; its full sequence is Probable quinol oxidase subunit 2 (366 aa).

Residues 1–19 (MSKFKSLLLLFGTLILLSG) form the signal peptide. Cys-20 carries N-palmitoyl cysteine lipidation. A lipid anchor (S-diacylglycerol cysteine) is attached at Cys-20. Transmembrane regions (helical) follow at residues 38-58 (FLILYSIVFMLVICFVVLGMF) and 80-100 (AIIETIWFVIPIIIVAALAIP). Positions 330 to 366 (EPYNNEFKKDESKNAKEMKKISKDAQDQDNDDHGGGH) are disordered. The segment covering 335–366 (EFKKDESKNAKEMKKISKDAQDQDNDDHGGGH) has biased composition (basic and acidic residues).

The protein belongs to the cytochrome c oxidase subunit 2 family.

The protein localises to the cell membrane. It carries out the reaction 2 a quinol + O2 = 2 a quinone + 2 H2O. Catalyzes quinol oxidation with the concomitant reduction of oxygen to water. Subunit II transfers the electrons from a quinol to the binuclear center of the catalytic subunit I. This is Probable quinol oxidase subunit 2 (qoxA) from Staphylococcus aureus (strain USA300).